We begin with the raw amino-acid sequence, 210 residues long: Ribosomal RNA small subunit methyltransferase G (210 aa).

S-adenosyl-L-methionine contacts are provided by residues Leu78, 124 to 125 (IE), and Arg138.

Belongs to the methyltransferase superfamily. RNA methyltransferase RsmG family.

The protein resides in the cytoplasm. The enzyme catalyses guanosine(527) in 16S rRNA + S-adenosyl-L-methionine = N(7)-methylguanosine(527) in 16S rRNA + S-adenosyl-L-homocysteine. Its function is as follows. Specifically methylates the N7 position of guanine in position 527 of 16S rRNA. This is Ribosomal RNA small subunit methyltransferase G from Bordetella bronchiseptica (strain ATCC BAA-588 / NCTC 13252 / RB50) (Alcaligenes bronchisepticus).